The following is a 189-amino-acid chain: MAQEKRGSRDDRQNREERDSEFVDKLVAINRVAKVVKGGRRFGFAALVVVGDQKGRVGFGHGKAREVPEAIRKATESAKRDLIFVPLRDGRTLHHDVHGRHGAGKVLLRSAKAGTGIIAGGPMRAVFETLGMHDVVAKSTGSSNPYNMVRATFDALKHQVHPKDVAAQRGLKYATLQARRAASGNGSEE.

Positions 22–85 (FVDKLVAINR…ESAKRDLIFV (64 aa)) constitute an S5 DRBM domain.

Belongs to the universal ribosomal protein uS5 family. Part of the 30S ribosomal subunit. Contacts proteins S4 and S8.

With S4 and S12 plays an important role in translational accuracy. Functionally, located at the back of the 30S subunit body where it stabilizes the conformation of the head with respect to the body. This chain is Small ribosomal subunit protein uS5, found in Allorhizobium ampelinum (strain ATCC BAA-846 / DSM 112012 / S4) (Agrobacterium vitis (strain S4)).